The following is a 160-amino-acid chain: ATP synthase subunit b (160 aa).

A helical transmembrane segment spans residues 12–32 (ISFVLFVWFCMKYVWYPFISI).

This sequence belongs to the ATPase B chain family. F-type ATPases have 2 components, F(1) - the catalytic core - and F(0) - the membrane proton channel. F(1) has five subunits: alpha(3), beta(3), gamma(1), delta(1), epsilon(1). F(0) has three main subunits: a(1), b(2) and c(10-14). The alpha and beta chains form an alternating ring which encloses part of the gamma chain. F(1) is attached to F(0) by a central stalk formed by the gamma and epsilon chains, while a peripheral stalk is formed by the delta and b chains.

Its subcellular location is the cell inner membrane. F(1)F(0) ATP synthase produces ATP from ADP in the presence of a proton or sodium gradient. F-type ATPases consist of two structural domains, F(1) containing the extramembraneous catalytic core and F(0) containing the membrane proton channel, linked together by a central stalk and a peripheral stalk. During catalysis, ATP synthesis in the catalytic domain of F(1) is coupled via a rotary mechanism of the central stalk subunits to proton translocation. Its function is as follows. Component of the F(0) channel, it forms part of the peripheral stalk, linking F(1) to F(0). The sequence is that of ATP synthase subunit b from Blochmanniella pennsylvanica (strain BPEN).